Here is a 122-residue protein sequence, read N- to C-terminus: MIQEESRVKVADNSGAKEVGIIRNLGGSVKKTSNIGDIVVCSIKKALPTGLVKEGQVVRAVVVRTKYGIKRKDGTHIKFDDNAVVILKEDGTPRATRVFGPVARELRDKGYLKIVSLAPEVL.

The protein belongs to the universal ribosomal protein uL14 family. In terms of assembly, part of the 50S ribosomal subunit. Forms a cluster with proteins L3 and L19. In the 70S ribosome, L14 and L19 interact and together make contacts with the 16S rRNA in bridges B5 and B8.

Its function is as follows. Binds to 23S rRNA. Forms part of two intersubunit bridges in the 70S ribosome. The protein is Large ribosomal subunit protein uL14 of Mycoplasma mobile (strain ATCC 43663 / 163K / NCTC 11711) (Mesomycoplasma mobile).